The chain runs to 111 residues: Large ribosomal subunit protein uL22 (111 aa).

Belongs to the universal ribosomal protein uL22 family. Part of the 50S ribosomal subunit.

This protein binds specifically to 23S rRNA; its binding is stimulated by other ribosomal proteins, e.g. L4, L17, and L20. It is important during the early stages of 50S assembly. It makes multiple contacts with different domains of the 23S rRNA in the assembled 50S subunit and ribosome. Functionally, the globular domain of the protein is located near the polypeptide exit tunnel on the outside of the subunit, while an extended beta-hairpin is found that lines the wall of the exit tunnel in the center of the 70S ribosome. The chain is Large ribosomal subunit protein uL22 from Chlamydia trachomatis serovar L2b (strain UCH-1/proctitis).